The following is a 270-amino-acid chain: MSLAVFSPCDVASKLLSEVVGEKYPKVDDDDSIVEPVTSLCLPQLSYEDFHHFSVIPLWNKTFPCRLATEWNPKNKKDAPPKKKNALVILERVASRSNQNAVSRVINILRSKVHLMFSSSNELPSSEDVERWKKSPETLAASEYGCNLFIQFLKEQTSENEVDFWLDCQKFRSSKMSSRQNEARRIFDEYFAMGSPKKIYIERYLWCVVQAYLVNDPGWRHTFDVAQAYVGLKLAKKSHKKFLEDPLYLDLVELVTSGVNYNKFWHDKLE.

One can recognise an RGS domain in the interval 135 to 252 (SPETLAASEY…LEDPLYLDLV (118 aa)).

Functionally, shown to have a role in viability and embryogenesis. In Caenorhabditis elegans, this protein is Regulator of G-protein signaling rgs-10 (rgs-10).